A 253-amino-acid chain; its full sequence is Tropomyosin-1 (253 aa).

Residues 7–253 are a coiled coil; it reads VNKLVRLQGK…MDDVGDDDTQ (247 aa).

The protein belongs to the tropomyosin family. In terms of assembly, homodimer.

In terms of biological role, tropomyosin, in association with the troponin complex, plays a central role in the calcium dependent regulation of muscle contraction. The sequence is that of Tropomyosin-1 (TROP1) from Hydra vulgaris (Hydra).